Here is a 294-residue protein sequence, read N- to C-terminus: UPF0282 protein APE_0500.1 (294 aa).

This sequence belongs to the UPF0282 family.

This chain is UPF0282 protein APE_0500.1, found in Aeropyrum pernix (strain ATCC 700893 / DSM 11879 / JCM 9820 / NBRC 100138 / K1).